A 310-amino-acid chain; its full sequence is MKCKFCSREAYIKIHYPKMYLCEEHFKEYFERKVSRTIERYKLLTKDERILVAVSGGKDSAVTAYVLKKLGYNIECLHINLGISGYSEKSEEYAKKQCKLIGAPLHIVRIKEILGYGIGEVKTRRPPCSYCGLTKRYIMNKFAYDNGFDAIATGHNLDDEASFLLNNILHWNTEYLAKGGPILPQQGKFIKKVKPLYEVTEREVVAYALAVGLEYIVEECPYARGATTLDMKGVLNELEEKRPGTKFNFVRGYLKKKKLFEPEIKEKEIKECKICRMPSSGDICAFCKFWGLKKEINFKVSSTDEEPFGP.

Zn(2+)-binding residues include Cys-3, Cys-6, Cys-22, and His-25. The ATP site is built by Ala-53 and Ile-79. Residues Cys-128 and Cys-131 each contribute to the [4Fe-4S] cluster site. The cysteines at positions 128 and 220 are disulfide-linked. The ATP site is built by Lys-135 and Gly-154. A [4Fe-4S] cluster-binding site is contributed by Cys-220. Cys-272, Cys-275, Cys-284, and Cys-287 together coordinate Zn(2+).

This sequence belongs to the TtcA family. TtuA subfamily. In terms of assembly, homodimer. It depends on [4Fe-4S] cluster as a cofactor. Mg(2+) serves as cofactor.

The catalysed reaction is 5-methyluridine(54) in tRNA + hydrogen sulfide + ATP = 5-methyl-2-thiouridine(54) in tRNA + AMP + diphosphate. It participates in tRNA modification. Catalyzes the ATP-dependent 2-thiolation of 5-methyluridine residue at position 54 in the T loop of tRNAs, leading to 5-methyl-2-thiouridine (m(5)s(2)U or s(2)T). This modification allows thermal stabilization of tRNAs in thermophilic microorganisms, and is required for cell growth at high temperatures. Can use free sulfide as sulfur source in vitro, which may be also the sulfur source in vivo. The chain is tRNA-5-methyluridine(54) 2-sulfurtransferase from Pyrococcus horikoshii (strain ATCC 700860 / DSM 12428 / JCM 9974 / NBRC 100139 / OT-3).